Here is a 341-residue protein sequence, read N- to C-terminus: Uroporphyrinogen decarboxylase (341 aa).

Substrate is bound by residues 25-29, Phe-44, Asp-74, Tyr-151, Ser-206, and His-318; that span reads RQAGR.

The protein belongs to the uroporphyrinogen decarboxylase family. In terms of assembly, homodimer.

The protein localises to the cytoplasm. It catalyses the reaction uroporphyrinogen III + 4 H(+) = coproporphyrinogen III + 4 CO2. It participates in porphyrin-containing compound metabolism; protoporphyrin-IX biosynthesis; coproporphyrinogen-III from 5-aminolevulinate: step 4/4. Functionally, catalyzes the decarboxylation of four acetate groups of uroporphyrinogen-III to yield coproporphyrinogen-III. The sequence is that of Uroporphyrinogen decarboxylase from Flavobacterium johnsoniae (strain ATCC 17061 / DSM 2064 / JCM 8514 / BCRC 14874 / CCUG 350202 / NBRC 14942 / NCIMB 11054 / UW101) (Cytophaga johnsonae).